Here is a 780-residue protein sequence, read N- to C-terminus: Carboxysome assembly protein CsoS2 (780 aa).

Over residues 1 to 15 (MARLSSRELALERRK) the composition is skewed to basic and acidic residues. 5 disordered regions span residues 1 to 173 (MARL…RAIE), 189 to 212 (KHGK…NPDL), 226 to 281 (TKAG…NRSV), 330 to 349 (NRVT…DEPG), and 382 to 444 (SLTQ…TGVT). Residues 5 to 24 (SSRELALERRKALTTSGKKS) form an N-repeat 1 repeat. Over residues 48–78 (AAAAVEPTAPAVSAPVKPTVSFTPASPSSSS) the composition is skewed to low complexity. Residues 86–105 (PSRDLVLARRDALSRRGKTA) form an N-repeat 2 repeat. Over residues 86–116 (PSRDLVLARRDALSRRGKTADTSRDRNRADV) the composition is skewed to basic and acidic residues. Residues 117 to 130 (ARQTQAAAPVAASA) show a composition bias toward low complexity. N-repeat repeat units lie at residues 175–194 (PSRA…GKTA) and 213–235 (TSRE…NKQS). 6 M-repeat repeats span residues 260–309 (KVGE…QTFC), 320–369 (KVRV…AAYC), 378–417 (KVGH…GDQY), 431–480 (KVGQ…NAFC), 490–535 (KVGF…LENA), and 541–599 (TSAV…ATAC). Residues 260-608 (KVGESTTSTG…CGNEAPAGTD (349 aa)) form a middle region region. The segment covering 264–276 (STTSTGQTVTGTQ) has biased composition (low complexity). Composition is skewed to low complexity over residues 387-403 (GRPV…SVTG) and 432-444 (VGQS…TGVT). The tract at residues 609–749 (SHGQAPEGAA…ATVPHERKRN (141 aa)) is C-terminal domain. C-repeat repeat units follow at residues 623–669 (SVMS…TEQF) and 693–726 (EQPA…EGVS). 2 disordered regions span residues 631–661 (AQQQ…LAGG) and 686–780 (AVVS…GARG). The segment covering 641–651 (VTGTSYEQGNR) has biased composition (polar residues). Residues 709–720 (TGDDWDRGEHVT) show a composition bias toward basic and acidic residues. The segment at 750 to 780 (EENEWPVSRVTGSSGNTEKGSLITVSGGARG) is C-terminal peptide. Positions 759 to 768 (VTGSSGNTEK) are enriched in polar residues.

The protein belongs to the CsoS2 family. As to quaternary structure, interacts via its N-terminal repeats with RuBisCO. Interacts with the major shell protein CsoS1. In terms of processing, unlike H.neapolitanus and predictions for P.marinus strain MIT 9313, this protein is not thought to have ribosomal frameshifting.

In terms of biological role, required for alpha-carboxysome (Cb) assembly, mediates interaction between RuBisCO and the carboxysome shell. The protein is probably intrinsically disordered. The C-terminal repeats act as the encapsulation signal to target proteins to the Cb; they are necessary and sufficient to target both CsoS2 and foreign proteins to the Cb. The N-terminal repeats of this protein bind simultaneously to both subunits of RuBisCO. Probably also interacts with the major shell proteins (CsoS1); that interaction would increase the local concentration of CsoS2 so that it can condense RuBisCO and full carboxysomes can be formed. The protein is Carboxysome assembly protein CsoS2 of Parasynechococcus marenigrum (strain WH8102).